The following is a 535-amino-acid chain: MALNLAQSAAAAACFATAGDARRAASVVAMPSSSSSATTSLRMKRQAACEPVACRAVARHVAAAAASSRRNGVPVFVMMPLDTVSKCGSALNRRKAVAASLAALKSAGVEGIMVDVWWGIVESEGPGRYNFDGYVELMEMARKTGLKVQAVMSFHQCGGNVGDSVNIPLPRWVVEEMEKDNDLAYTDQWGRRNFEYISLGCDAMPVFKGRTPVECYTDFMRAFRDHFASFLGDTIVEIQVGMGPAGELRYPSYPESNGTWRFPGIGAFQCNDRYMRSSLKAAAEARGKPEWGHGGPTDAGGYNNWPEDTVFFRGDCGGWSTEYGEFFLSWYSQMLLEHGERVLSGATSVFGDGAGAKISVKVAGIHWHYGTRSHAPELTAGYYNTRHRDGYLPIARMLARHGAVLNFTCVEMRDHEQPQEAQCMPEALVRQVAAAARAAGVGLAGENALPRYDGTAHDQVVAAAADRAAEDRMVAFTYLRMGPDLFHPDNWRRFVAFVRRMSESGSPREAAESAAHGVAQATGSLVHEAAVALRS.

The transit peptide at 1 to 36 (MALNLAQSAAAAACFATAGDARRAASVVAMPSSSSS) directs the protein to the chloroplast. D115, H155, and D163 together coordinate substrate. E247 functions as the Proton donor in the catalytic mechanism. Substrate is bound by residues K361, H366, and T408. The active-site Proton acceptor is the E446. Residues 447 to 448 (NA) and R480 contribute to the substrate site.

Belongs to the glycosyl hydrolase 14 family.

It is found in the plastid. The protein localises to the chloroplast. It catalyses the reaction Hydrolysis of (1-&gt;4)-alpha-D-glucosidic linkages in polysaccharides so as to remove successive maltose units from the non-reducing ends of the chains.. Functionally, possesses beta-amylase activity in vitro. May be involved in cold resistance by mediating the accumulation of maltose upon freezing stress, thus contributing to the protection of membranes. The chain is Beta-amylase 1, chloroplastic from Oryza sativa subsp. japonica (Rice).